We begin with the raw amino-acid sequence, 528 residues long: GMP synthase [glutamine-hydrolyzing] (528 aa).

Residues 13–204 (AIVILDFGSQ…VYHICGCEPD (192 aa)) form the Glutamine amidotransferase type-1 domain. C90 serves as the catalytic Nucleophile. Active-site residues include H178 and E180. Residues 205 to 403 (WTTSAFIDEA…LGLPEEIVRR (199 aa)) form the GMPS ATP-PPase domain. ATP is bound at residue 232-238 (SGGVDSS).

As to quaternary structure, homodimer.

The enzyme catalyses XMP + L-glutamine + ATP + H2O = GMP + L-glutamate + AMP + diphosphate + 2 H(+). It functions in the pathway purine metabolism; GMP biosynthesis; GMP from XMP (L-Gln route): step 1/1. Catalyzes the synthesis of GMP from XMP. The polypeptide is GMP synthase [glutamine-hydrolyzing] (Parasynechococcus marenigrum (strain WH8102)).